The chain runs to 172 residues: uncharacterized protein (172 aa).

4 consecutive transmembrane segments (helical) span residues 1–21 (MLFINITFACILAIRFYSLSI), 41–61 (NSTLLSIAHVAFYFAAIIEAN), 72–92 (QIGLAILIFAIAMLFYVIYEL), and 136–156 (FCQAKYTALVGLPIYLLILAV).

The protein localises to the cell membrane. This is an uncharacterized protein from Haemophilus influenzae (strain ATCC 51907 / DSM 11121 / KW20 / Rd).